The chain runs to 1163 residues: MATLAYSIEVEGLEDETLVVRGFHGQESLSNSVFLGQACYGFRYEVQLASRVSNLTAEQMVDKRAELKLYRNSQLVQRVHGIVRAFSQGDIGHHHTFYQLTLVPALERLSLRHNSRIFQKQTVPEILSILLQEMGINDYAFALKRDGVQREFCVQYRESDIDFLHRLAAEEGLVYSFVHEAGKHTLYFSDASDSLSKLPEPIPYNALVGGAIDTPYIHGLTYRTQAEVSEVQLKDYSFKKPAYSFLQTVQGTELDYQQTRYQHFDAPGRYKDDVNGAAFSQIRLDYLRRHAHTATGQSNEPLLRAGYKFDLQEHLDPAMNRDWVVVSINHQGEQPQALQEDGGSGATTYSNQFSLIPGHLHWRAEPQPKPQVDGPMIATVVGPEGEEIFCDEHGRVKIHFPWDRYSNGNEQSSCWVRVSQGWAGSQYGFIAIPRIGHEVIVEFLNGDPDQPIITGRTYHATNTPPYTLPEHKTKTVLRTETHQGEGFNELSFEDQAGKEQIYLHAQKDFDGLIENDHTTVIRHDHHLTVENDQFTQIKHNQHLTVEWESREAVTGEQVLSIEGSLHVKTGKVWVNEAGTEIHVKAGQKVVIEAGSEITVKAGGSFVKVDPAGVHLSGALVNLNSGGSAGSGSGFGGAMPALPGGLEPAVALAPPQTISYQALLQAEQANVPAVKVCPLAAQEATPAVNSITPPPPPPIAPPMAPPQPIMNPQPTANAQPNLGRSTKATPDFPTHFPKSSIGIENELAGLVVAMPANSAQKFGYVKSAQGDALFMLTKDMNQGSYQRPPSLQDGKNYQNWQTHTVELVSYPCEMDDKAAVETRKQAMLWLATHFTTHIDQSNHQPLAPIQSEDGRFVIEITNAKHVIAAGNGISAESQGQTITMTPSGQQATVGVAAKGFGTSATPELRLLESAPWYQKSLKSQFASLTSAENLDDKELAANVFAYLTSIYLKTAELAKKFGIYINEWDPMSEQITPNANGLTDPKVKNAWEILPRTKPSKIVEILSKSDAKAVMKHIKPQLQSRYSESLSKNVFQYFQDGGEVAGHGINNATVGDKHSPELAILFEFRTVPNELQSYLPKTESTTKSEVKLLDQFDPMKRKTVIQQVESLVQNSGDAFDKWYQSYRDSMNQPPVKNAKKIASANQKAQWVKEHNPQEWQRIIA.

One can recognise an ACD domain in the interval 728 to 1163; it reads TPDFPTHFPK…NPQEWQRIIA (436 aa). 739–743 lines the ATP pocket; it reads SIGIE. 2 residues coordinate Mg(2+): Glu743 and Glu805. Position 808 (Ser808) interacts with ATP. Gln889 contacts Mg(2+). An ATP-binding site is contributed by Arg995. Glu1066 contacts Mg(2+).

This sequence belongs to the VgrG protein family. In terms of assembly, interacts with protein VC1417. Requires Mg(2+) as cofactor.

The protein localises to the secreted. It is found in the host cytoplasm. Its subcellular location is the host cytosol. Part of the type VI secretion system (T6SS) specialized secretion system, which delivers several virulence factors in both prokaryotic and eukaryotic cells during infection. Forms the spike at the tip of the elongating tube probably formed by hemolysin co-regulated protein/Hcp. Allows the delivery of the TseL antibacterial toxin to target cells where it exerts its toxicity. Also acts directly as an actin-directed toxin that catalyzes the covalent cross-linking of host cytoplasmic monomeric actin. Mediates the cross-link between 'Lys-50' of one monomer and 'Glu-270' of another actin monomer, resulting in formation of highly toxic actin oligomers that cause cell rounding. The toxin can be highly efficient at very low concentrations by acting on formin homology family proteins: toxic actin oligomers bind with high affinity to formins and adversely affect both nucleation and elongation abilities of formins, causing their potent inhibition in both profilin-dependent and independent manners. Acts as an acid--amino-acid ligase that transfers the gamma-phosphoryl group of ATP to the 'Glu-270' actin residue, resulting in the formation of an activated acyl phosphate intermediate. This intermediate is further hydrolyzed and the energy of hydrolysis is utilized for the formation of the amide bond between actin subunits. In Vibrio cholerae serotype O1 (strain ATCC 39315 / El Tor Inaba N16961), this protein is Actin cross-linking toxin VgrG1.